A 131-amino-acid polypeptide reads, in one-letter code: Putative pre-16S rRNA nuclease (131 aa).

The protein belongs to the YqgF nuclease family.

The protein resides in the cytoplasm. Could be a nuclease involved in processing of the 5'-end of pre-16S rRNA. The chain is Putative pre-16S rRNA nuclease from Bordetella petrii (strain ATCC BAA-461 / DSM 12804 / CCUG 43448).